A 641-amino-acid polypeptide reads, in one-letter code: FAD-binding monooxygenase ausB (641 aa).

The tract at residues 1-68 (MAIGPKPESI…DSTTNVPYSL (68 aa)) is disordered. Over residues 49 to 68 (WLTSTDQPQPDSTTNVPYSL) the composition is skewed to polar residues. Residues 115–118 (TWYW), 127–128 (DI), and Tyr133 contribute to the FAD site. 125–127 (MCD) serves as a coordination point for NADP(+). Residues 272 to 278 (TGSTAVQ) and 295 to 296 (RT) contribute to the NADP(+) site.

The protein belongs to the FAD-binding monooxygenase family. Requires FAD as cofactor.

The catalysed reaction is protoaustinoid A + AH2 + O2 = berkeleyone A + A + H2O. It participates in secondary metabolite biosynthesis; terpenoid biosynthesis. FAD-binding monooxygenase; part of the gene cluster A that mediates the biosynthesis of the fungal meroterpenoid acetoxydehydroaustin. The first step of the pathway is the synthesis of 3,5-dimethylorsellinic acid by the polyketide synthase ausA. 3,5-dimethylorsellinic acid is then prenylated by the polyprenyl transferase ausN. Further epoxidation by the FAD-dependent monooxygenase ausM and cyclization by the probable terpene cyclase ausL lead to the formation of protoaustinoid A. Protoaustinoid A is then oxidized to spiro-lactone preaustinoid A3 by the combined action of the FAD-binding monooxygenases ausB and ausC, and the dioxygenase ausE. Acid-catalyzed keto-rearrangement and ring contraction of the tetraketide portion of preaustinoid A3 by ausJ lead to the formation of preaustinoid A4. The aldo-keto reductase ausK, with the help of ausH, is involved in the next step by transforming preaustinoid A4 into isoaustinone which is in turn hydroxylated by the P450 monooxygenase ausI to form austinolide. The cytochrome P450 monooxygenase ausG then modifies austinolide to austinol. Austinol is further acetylated to austin by the O-acetyltransferase ausP, which spontaneously changes to dehydroaustin. The cytochrome P450 monooxygenase then converts dehydroaustin is into 7-dehydrodehydroaustin. The hydroxylation catalyzed by ausR permits the second O-acetyltransferase ausQ to add an additional acetyl group to the molecule, leading to the formation of acetoxydehydroaustin. Due to genetic rearrangements of the clusters and the subsequent loss of some enzymes, the end product of the Penicillium brasilianum austinoid biosynthesis clusters is acetoxydehydroaustin. This chain is FAD-binding monooxygenase ausB, found in Penicillium brasilianum.